We begin with the raw amino-acid sequence, 102 residues long: Urease subunit beta (102 aa).

It belongs to the urease beta subunit family. In terms of assembly, heterotrimer of UreA (gamma), UreB (beta) and UreC (alpha) subunits. Three heterotrimers associate to form the active enzyme.

The protein localises to the cytoplasm. It catalyses the reaction urea + 2 H2O + H(+) = hydrogencarbonate + 2 NH4(+). The protein operates within nitrogen metabolism; urea degradation; CO(2) and NH(3) from urea (urease route): step 1/1. The chain is Urease subunit beta from Trichodesmium erythraeum (strain IMS101).